Reading from the N-terminus, the 131-residue chain is METANGEEPPAGPPVSLHGRRLLRVGGACPTPLPVLQRLPPSALHHTLHCVPRRVCVSPLGQVTRIPPVRTVRRAPSGLLPQRRGGPSWWPPSGVARGGPSWWPPSGVVRGGPSSWPPSGVAEPREALGLP.

Residues 101 to 131 (SWWPPSGVVRGGPSSWPPSGVAEPREALGLP) are disordered.

This is an uncharacterized protein from Homo sapiens (Human).